A 411-amino-acid polypeptide reads, in one-letter code: MSSAATKATFCIQNGPSFEGISFGANKSVAGETVFTTSLVGYPESMTDPSYRGQILVFTQPLIGNYGVPSGEARDEYNLLKYFESPHIHVVGIVVAEYAYQYSHWTAVESLAQWCQREGVAAITGVDTRELVQYLREQGSSLGRITLADHDPVPYVNPMKTNLVAQVTTKKPFHVSALPGKAKANVALIDCGVKENIIRCLVKRGANVTVFPYDYRIQDVASEFDGIFLSNGPGNPELCQATISNVRELLNNPVYDCIPIFGICLGHQLLALASGASTHKLKYGNRAHNIPAMDLTTGQCHITSQNHGYAVDPETLPKDQWKPYFVNLNDKSNEGMIHLQRPIFSTQFHPEAKGGPLDTAILFDKFFDNIEKYQLQSQAKSSISLKVTYSTDKSRLQSINVTKLAKERVLF.

The L-glutamine site is built by Ser50, Gly232, and Gly234. The Glutamine amidotransferase type-1 domain occupies 185-376; that stretch reads NVALIDCGVK…FDNIEKYQLQ (192 aa). The active-site Nucleophile is Cys264. Positions 265, 268, 306, 308, and 309 each coordinate L-glutamine. Active-site residues include His349 and Glu351.

It belongs to the CarA family. As to quaternary structure, heterodimer composed of 2 chains; the small (or glutamine) chain promotes the hydrolysis of glutamine to ammonia, which is used by the large (or ammonia) chain to synthesize carbamoyl phosphate.

Its subcellular location is the cytoplasm. It catalyses the reaction hydrogencarbonate + L-glutamine + 2 ATP + H2O = carbamoyl phosphate + L-glutamate + 2 ADP + phosphate + 2 H(+). The catalysed reaction is L-glutamine + H2O = L-glutamate + NH4(+). The protein operates within amino-acid biosynthesis; L-arginine biosynthesis; carbamoyl phosphate from bicarbonate: step 1/1. Functionally, small subunit of the arginine-specific carbamoyl phosphate synthase (CPSase). CPSase catalyzes the formation of carbamoyl phosphate from the ammonia moiety of glutamine, carbonate, and phosphate donated by ATP, constituting the first step of 2 biosynthetic pathways, one leading to arginine and/or urea and the other to pyrimidine nucleotides. The small subunit (glutamine amidotransferase) binds and cleaves glutamine to supply the large subunit with the substrate ammonia. In Saccharomyces cerevisiae (strain ATCC 204508 / S288c) (Baker's yeast), this protein is Carbamoyl phosphate synthase arginine-specific small chain (CPA1).